The primary structure comprises 291 residues: Pirin (291 aa).

Residues histidine 56, histidine 58, histidine 101, and glutamate 103 each coordinate Fe cation.

The protein belongs to the pirin family. May interact with NF1/CTF1. Interacts with BCL3. Identified in a complex comprised of PIR, BLC3, NFKB1 and target DNA. Requires Fe cation as cofactor.

Its subcellular location is the nucleus. The protein localises to the cytoplasm. The enzyme catalyses quercetin + O2 = 2-(3,4-dihydroxybenzoyloxy)-4,6-dihydroxybenzoate + CO. The protein operates within flavonoid metabolism; quercetin degradation. In terms of biological role, transcriptional coregulator of NF-kappa-B which facilitates binding of NF-kappa-B proteins to target kappa-B genes in a redox-state-dependent manner. May be required for efficient terminal myeloid maturation of hematopoietic cells. Has quercetin 2,3-dioxygenase activity (in vitro). This is Pirin (Pir) from Rattus norvegicus (Rat).